The following is a 186-amino-acid chain: Tetratricopeptide repeat protein 36 (186 aa).

TPR repeat units follow at residues 48–81, 83–115, and 120–153; these read SKAL…LPDR, SAYN…SGGR, and RQSF…GSPF.

The protein belongs to the TTC36 family.

This chain is Tetratricopeptide repeat protein 36 (Ttc36), found in Mus musculus (Mouse).